A 262-amino-acid polypeptide reads, in one-letter code: Pyridoxine 5'-phosphate synthase (262 aa).

Asn-6 serves as a coordination point for 3-amino-2-oxopropyl phosphate. Residue 8-9 (DH) coordinates 1-deoxy-D-xylulose 5-phosphate. Residue Arg-17 coordinates 3-amino-2-oxopropyl phosphate. Residue His-42 is the Proton acceptor of the active site. Residues Arg-44 and His-49 each contribute to the 1-deoxy-D-xylulose 5-phosphate site. Residue Glu-69 is the Proton acceptor of the active site. Thr-99 provides a ligand contact to 1-deoxy-D-xylulose 5-phosphate. His-213 (proton donor) is an active-site residue. 3-amino-2-oxopropyl phosphate is bound by residues Gly-214 and 235–236 (GH).

It belongs to the PNP synthase family. Homooctamer; tetramer of dimers.

Its subcellular location is the cytoplasm. The enzyme catalyses 3-amino-2-oxopropyl phosphate + 1-deoxy-D-xylulose 5-phosphate = pyridoxine 5'-phosphate + phosphate + 2 H2O + H(+). The protein operates within cofactor biosynthesis; pyridoxine 5'-phosphate biosynthesis; pyridoxine 5'-phosphate from D-erythrose 4-phosphate: step 5/5. Its function is as follows. Catalyzes the complicated ring closure reaction between the two acyclic compounds 1-deoxy-D-xylulose-5-phosphate (DXP) and 3-amino-2-oxopropyl phosphate (1-amino-acetone-3-phosphate or AAP) to form pyridoxine 5'-phosphate (PNP) and inorganic phosphate. This Wolinella succinogenes (strain ATCC 29543 / DSM 1740 / CCUG 13145 / JCM 31913 / LMG 7466 / NCTC 11488 / FDC 602W) (Vibrio succinogenes) protein is Pyridoxine 5'-phosphate synthase.